The following is a 276-amino-acid chain: Shikimate dehydrogenase (NADP(+)) (276 aa).

Shikimate contacts are provided by residues 15 to 17 (SKS) and Thr-62. The Proton acceptor role is filled by Lys-66. NADP(+) is bound at residue Glu-78. The shikimate site is built by Asn-87 and Asp-103. Residues 128–132 (GAGGA) and Ile-217 each bind NADP(+). A shikimate-binding site is contributed by Tyr-219. Position 240 (Gly-240) interacts with NADP(+).

This sequence belongs to the shikimate dehydrogenase family. As to quaternary structure, homodimer.

It catalyses the reaction shikimate + NADP(+) = 3-dehydroshikimate + NADPH + H(+). It participates in metabolic intermediate biosynthesis; chorismate biosynthesis; chorismate from D-erythrose 4-phosphate and phosphoenolpyruvate: step 4/7. Involved in the biosynthesis of the chorismate, which leads to the biosynthesis of aromatic amino acids. Catalyzes the reversible NADPH linked reduction of 3-dehydroshikimate (DHSA) to yield shikimate (SA). The polypeptide is Shikimate dehydrogenase (NADP(+)) (Lysinibacillus sphaericus (strain C3-41)).